The sequence spans 341 residues: S-adenosylmethionine:tRNA ribosyltransferase-isomerase (341 aa).

It belongs to the QueA family. As to quaternary structure, monomer.

It localises to the cytoplasm. The enzyme catalyses 7-aminomethyl-7-carbaguanosine(34) in tRNA + S-adenosyl-L-methionine = epoxyqueuosine(34) in tRNA + adenine + L-methionine + 2 H(+). It participates in tRNA modification; tRNA-queuosine biosynthesis. Its function is as follows. Transfers and isomerizes the ribose moiety from AdoMet to the 7-aminomethyl group of 7-deazaguanine (preQ1-tRNA) to give epoxyqueuosine (oQ-tRNA). This Pelotomaculum thermopropionicum (strain DSM 13744 / JCM 10971 / SI) protein is S-adenosylmethionine:tRNA ribosyltransferase-isomerase.